The following is a 347-amino-acid chain: Ketol-acid reductoisomerase (NADP(+)) (347 aa).

One can recognise a KARI N-terminal Rossmann domain in the interval 3-182; that stretch reads TKMFYDKDID…GSGCAGILET (180 aa). NADP(+) is bound by residues 26-29, arginine 49, serine 53, and 83-86; these read YGAQ and DELQ. The active site involves histidine 108. Residue glycine 134 participates in NADP(+) binding. The KARI C-terminal knotted domain maps to 183-328; it reads TFEEETTEDL…KKVRAMMPWI (146 aa). Mg(2+) contacts are provided by aspartate 191, glutamate 195, glutamate 227, and glutamate 231. Substrate is bound at residue serine 252.

The protein belongs to the ketol-acid reductoisomerase family. Requires Mg(2+) as cofactor.

The enzyme catalyses (2R)-2,3-dihydroxy-3-methylbutanoate + NADP(+) = (2S)-2-acetolactate + NADPH + H(+). It carries out the reaction (2R,3R)-2,3-dihydroxy-3-methylpentanoate + NADP(+) = (S)-2-ethyl-2-hydroxy-3-oxobutanoate + NADPH + H(+). Its pathway is amino-acid biosynthesis; L-isoleucine biosynthesis; L-isoleucine from 2-oxobutanoate: step 2/4. It functions in the pathway amino-acid biosynthesis; L-valine biosynthesis; L-valine from pyruvate: step 2/4. Involved in the biosynthesis of branched-chain amino acids (BCAA). Catalyzes an alkyl-migration followed by a ketol-acid reduction of (S)-2-acetolactate (S2AL) to yield (R)-2,3-dihydroxy-isovalerate. In the isomerase reaction, S2AL is rearranged via a Mg-dependent methyl migration to produce 3-hydroxy-3-methyl-2-ketobutyrate (HMKB). In the reductase reaction, this 2-ketoacid undergoes a metal-dependent reduction by NADPH to yield (R)-2,3-dihydroxy-isovalerate. This is Ketol-acid reductoisomerase (NADP(+)) from Leuconostoc mesenteroides subsp. cremoris.